A 189-amino-acid polypeptide reads, in one-letter code: Vacuolar iron transporter homolog 2 (189 aa).

Residues Met-1–Ala-10 are Cytoplasmic-facing. Residues Val-11–Val-31 form a helical membrane-spanning segment. Residues Asn-32–Met-38 are Vacuolar-facing. A helical transmembrane segment spans residues Leu-39–Val-59. The Cytoplasmic segment spans residues Ser-60–Ala-97. The chain crosses the membrane as a helical span at residues Phe-98–Ile-118. Over Lys-119–Arg-124 the chain is Vacuolar. Residues Val-125–Tyr-145 form a helical membrane-spanning segment. Over Leu-146–Leu-159 the chain is Cytoplasmic. The helical transmembrane segment at Leu-160–Phe-180 threads the bilayer. Residues His-181–Ala-189 lie on the Vacuolar side of the membrane.

Belongs to the CCC1 family.

The protein localises to the vacuole membrane. The catalysed reaction is Fe(2+)(in) = Fe(2+)(out). Functionally, probable vacuolar iron transporter that may be involved in the regulation of iron distribution throughout the plant. This is Vacuolar iron transporter homolog 2 from Oryza sativa subsp. japonica (Rice).